The following is a 105-amino-acid chain: Integration host factor subunit alpha (105 aa).

It belongs to the bacterial histone-like protein family. In terms of assembly, heterodimer of an alpha and a beta chain.

Its function is as follows. This protein is one of the two subunits of integration host factor, a specific DNA-binding protein that functions in genetic recombination as well as in transcriptional and translational control. This Rhodospirillum rubrum (strain ATCC 11170 / ATH 1.1.1 / DSM 467 / LMG 4362 / NCIMB 8255 / S1) protein is Integration host factor subunit alpha.